The sequence spans 193 residues: MGRHSTKTSSAFTKLAASTIAFGAAATIMAPSASAAPDSDWDRLAQCESGGNWAINTGNGYHGGLQFSASTWAAYGGQEFATYAYQATREQQIAVAERTLAGQGWGAWPACSASLGLNSAPTQRDLSATTSTPEPAAAAPAVAEYNAPAANIAVGSTDLNTIKSTYGAVTGTLAQYGITVPAEVESYYNAFVG.

A signal peptide spans 1–35; sequence MGRHSTKTSSAFTKLAASTIAFGAAATIMAPSASA.

This sequence belongs to the transglycosylase family. Rpf subfamily.

It is found in the secreted. Factor that stimulates resuscitation of dormant cells. Has peptidoglycan (PG) hydrolytic activity. Active in the pM concentration range. Has little to no effect on actively-growing cells. PG fragments could either directly activate the resuscitation pathway of dormant bacteria or serve as a substrate for endogenous Rpf, resulting in low molecular weight products with resuscitation activity. In Corynebacterium glutamicum (strain ATCC 13032 / DSM 20300 / JCM 1318 / BCRC 11384 / CCUG 27702 / LMG 3730 / NBRC 12168 / NCIMB 10025 / NRRL B-2784 / 534), this protein is Resuscitation-promoting factor Rpf1 (rpf1).